The primary structure comprises 299 residues: Zeta-sarcoglycan (299 aa).

The Cytoplasmic portion of the chain corresponds to 1–37 (MTREQYILATQQNNLPRTENAQLYPVGIYGWRKRCLY). A helical; Signal-anchor for type II membrane protein membrane pass occupies residues 38-58 (FFVLLLLVTMIVNLAMTIWIL). Over 59–299 (KVMNFTVDGM…QSSSNICLWS (241 aa)) the chain is Extracellular. 2 N-linked (GlcNAc...) asparagine glycosylation sites follow: asparagine 62 and asparagine 110. Cysteine 273 and cysteine 289 form a disulfide bridge.

This sequence belongs to the sarcoglycan beta/delta/gamma/zeta family.

Its subcellular location is the cell membrane. The protein localises to the sarcolemma. It is found in the cytoplasm. It localises to the cytoskeleton. Component of the sarcoglycan complex, a subcomplex of the dystrophin-glycoprotein complex which forms a link between the F-actin cytoskeleton and the extracellular matrix. May play a role in the maintenance of striated muscle membrane stability. This Homo sapiens (Human) protein is Zeta-sarcoglycan (SGCZ).